The chain runs to 301 residues: Homoserine O-acetyltransferase (301 aa).

The active-site Acyl-thioester intermediate is the C142. The substrate site is built by K163 and S192. The Proton acceptor role is filled by H235. Residue E237 is part of the active site. R249 serves as a coordination point for substrate.

It belongs to the MetA family.

It is found in the cytoplasm. The enzyme catalyses L-homoserine + acetyl-CoA = O-acetyl-L-homoserine + CoA. The protein operates within amino-acid biosynthesis; L-methionine biosynthesis via de novo pathway; O-acetyl-L-homoserine from L-homoserine: step 1/1. Its function is as follows. Transfers an acetyl group from acetyl-CoA to L-homoserine, forming acetyl-L-homoserine. This is Homoserine O-acetyltransferase from Novosphingobium aromaticivorans (strain ATCC 700278 / DSM 12444 / CCUG 56034 / CIP 105152 / NBRC 16084 / F199).